The primary structure comprises 1594 residues: RB1-inducible coiled-coil protein 1 (1594 aa).

Residues Ser222, Ser229, and Ser237 each carry the phosphoserine modification. Residue Thr238 is modified to Phosphothreonine. Residues Ser243, Ser253, Ser257, Ser261, and Ser266 each carry the phosphoserine modification. The Nuclear localization signal signature appears at 566–569; it reads KPRK. Residues Ser624, Ser647, Ser650, Ser652, Ser653, Ser734, Ser1091, Ser1222, Ser1370, and Ser1484 each carry the phosphoserine modification. Residues 638-673 form a disordered region; it reads EQKASVSQTSPQSASSPRMESTAGITTTTSPRTPPP. A compositionally biased stretch (low complexity) spans 641-654; it reads ASVSQTSPQSASSP. An FFAT motif is present at residues 731–737; sequence DFMSAVN. 2 coiled-coil regions span residues 859–1397 and 1438–1485; these read LKEK…SSSF and METS…SQSM.

The protein belongs to the ATG17 family. As to quaternary structure, part of a complex consisting of ATG13/KIAA0652, ULK1 and RB1CC1. This complex associates with ATG101. Interacts with PTK2/FAK1 and PTK2B/PYK2. Interacts with GABARAP and GABARAPL1. Interacts with ATG16L1; the interaction is required for ULK1 complex-dependent autophagy. Interacts with RNF111, SKI and SMAD7. Interacts with COP1 in the cytoplasm of proliferating cells in response to UV stimulation. Interacts with TP53. Interacts with C9orf72. Interacts with WDR45B. Interacts with ATG13; this interaction is increased in the absence of TMEM39A. Interacts with WIPI2. Interacts with TAX1BP1. Interacts (via phosphorylated FFAT motif) with MOSPD2, VAPA and VAPB. In terms of processing, phosphorylation at Ser-734 of the FFAT motif activates interaction with MOSPD2, VAPA and VAPB. Expression levels correlated closely with those of RB1 in cancer cell lines as well as in various normal human tissues. Abundantly expressed in human musculoskeletal and cultured osteosarcoma cells.

It localises to the nucleus. The protein localises to the cytoplasm. The protein resides in the cytosol. Its subcellular location is the preautophagosomal structure. It is found in the lysosome. Its function is as follows. Involved in autophagy. Regulates early events but also late events of autophagosome formation through direct interaction with Atg16L1. Required for the formation of the autophagosome-like double-membrane structure that surrounds the Salmonella-containing vacuole (SCV) during S.typhimurium infection and subsequent xenophagy. Involved in repair of DNA damage caused by ionizing radiation, which subsequently improves cell survival by decreasing apoptosis. Inhibits PTK2/FAK1 and PTK2B/PYK2 kinase activity, affecting their downstream signaling pathways. Plays a role as a modulator of TGF-beta-signaling by restricting substrate specificity of RNF111. Functions as a DNA-binding transcription factor. Is a potent regulator of the RB1 pathway through induction of RB1 expression. Plays a crucial role in muscular differentiation. Plays an indispensable role in fetal hematopoiesis and in the regulation of neuronal homeostasis. This chain is RB1-inducible coiled-coil protein 1, found in Homo sapiens (Human).